Here is a 179-residue protein sequence, read N- to C-terminus: NADH-quinone oxidoreductase subunit I (179 aa).

4Fe-4S ferredoxin-type domains follow at residues 45 to 74 and 90 to 119; these read RHPDTGLEKCIGCSLCAAVCPAYAIYVEAA and KVYEINMLRCIFCGLCEEACPTGAVVLGNE. 8 residues coordinate [4Fe-4S] cluster: cysteine 54, cysteine 57, cysteine 60, cysteine 64, cysteine 99, cysteine 102, cysteine 105, and cysteine 109. Residues 146 to 179 are disordered; the sequence is PQRREAQRTGKPVRLGFKVPKGPRPELEGVEYPR. The span at 168–179 shows a compositional bias: basic and acidic residues; that stretch reads PRPELEGVEYPR.

It belongs to the complex I 23 kDa subunit family. As to quaternary structure, NDH-1 is composed of 15 different subunits. Subunits NuoA, H, J, K, L, M, N constitute the membrane sector of the complex. [4Fe-4S] cluster is required as a cofactor.

The protein localises to the cell membrane. The catalysed reaction is a quinone + NADH + 5 H(+)(in) = a quinol + NAD(+) + 4 H(+)(out). In terms of biological role, NDH-1 shuttles electrons from NADH, via FMN and iron-sulfur (Fe-S) centers, to quinones in the respiratory chain. The immediate electron acceptor for the enzyme in this species is believed to be ubiquinone. Couples the redox reaction to proton translocation (for every two electrons transferred, four hydrogen ions are translocated across the cytoplasmic membrane), and thus conserves the redox energy in a proton gradient. The chain is NADH-quinone oxidoreductase subunit I from Deinococcus geothermalis (strain DSM 11300 / CIP 105573 / AG-3a).